The primary structure comprises 246 residues: Pyridoxine 5'-phosphate synthase (246 aa).

Residue asparagine 6 coordinates 3-amino-2-oxopropyl phosphate. 8-9 (DH) is a binding site for 1-deoxy-D-xylulose 5-phosphate. Position 17 (arginine 17) interacts with 3-amino-2-oxopropyl phosphate. Histidine 49 functions as the Proton acceptor in the catalytic mechanism. 1-deoxy-D-xylulose 5-phosphate-binding residues include arginine 51 and histidine 56. Glutamate 76 functions as the Proton acceptor in the catalytic mechanism. Threonine 106 provides a ligand contact to 1-deoxy-D-xylulose 5-phosphate. Histidine 196 serves as the catalytic Proton donor. Residues glycine 197 and 219 to 220 (GH) each bind 3-amino-2-oxopropyl phosphate.

This sequence belongs to the PNP synthase family. In terms of assembly, homooctamer; tetramer of dimers.

Its subcellular location is the cytoplasm. It carries out the reaction 3-amino-2-oxopropyl phosphate + 1-deoxy-D-xylulose 5-phosphate = pyridoxine 5'-phosphate + phosphate + 2 H2O + H(+). The protein operates within cofactor biosynthesis; pyridoxine 5'-phosphate biosynthesis; pyridoxine 5'-phosphate from D-erythrose 4-phosphate: step 5/5. Catalyzes the complicated ring closure reaction between the two acyclic compounds 1-deoxy-D-xylulose-5-phosphate (DXP) and 3-amino-2-oxopropyl phosphate (1-amino-acetone-3-phosphate or AAP) to form pyridoxine 5'-phosphate (PNP) and inorganic phosphate. The sequence is that of Pyridoxine 5'-phosphate synthase from Akkermansia muciniphila (strain ATCC BAA-835 / DSM 22959 / JCM 33894 / BCRC 81048 / CCUG 64013 / CIP 107961 / Muc).